The primary structure comprises 415 residues: Lipoyl synthase, apicoplast (415 aa).

Residues 1 to 23 form the signal peptide; that stretch reads MHFGIPSLFYLYILFSIIMRIKC. 7 residues coordinate [4Fe-4S] cluster: C153, C158, C164, C179, C183, C186, and S394. Residues 165–383 enclose the Radical SAM core domain; sequence WNIGTATIML…KEEGLKMGFK (219 aa).

The protein belongs to the radical SAM superfamily. Lipoyl synthase family. Requires [4Fe-4S] cluster as cofactor.

The protein localises to the plastid. It is found in the apicoplast. It carries out the reaction [[Fe-S] cluster scaffold protein carrying a second [4Fe-4S](2+) cluster] + N(6)-octanoyl-L-lysyl-[protein] + 2 oxidized [2Fe-2S]-[ferredoxin] + 2 S-adenosyl-L-methionine + 4 H(+) = [[Fe-S] cluster scaffold protein] + N(6)-[(R)-dihydrolipoyl]-L-lysyl-[protein] + 4 Fe(3+) + 2 hydrogen sulfide + 2 5'-deoxyadenosine + 2 L-methionine + 2 reduced [2Fe-2S]-[ferredoxin]. The protein operates within protein modification; protein lipoylation via endogenous pathway; protein N(6)-(lipoyl)lysine from octanoyl-[acyl-carrier-protein]: step 2/2. Its function is as follows. Catalyzes the radical-mediated insertion of two sulfur atoms into the C-6 and C-8 positions of the octanoyl moiety bound to the lipoyl domains of lipoate-dependent enzymes, thereby converting the octanoylated domains into lipoylated derivatives. The polypeptide is Lipoyl synthase, apicoplast (Plasmodium falciparum (isolate 3D7)).